The sequence spans 172 residues: Adenine phosphoribosyltransferase (172 aa).

Belongs to the purine/pyrimidine phosphoribosyltransferase family. In terms of assembly, homodimer.

It is found in the cytoplasm. The catalysed reaction is AMP + diphosphate = 5-phospho-alpha-D-ribose 1-diphosphate + adenine. It participates in purine metabolism; AMP biosynthesis via salvage pathway; AMP from adenine: step 1/1. In terms of biological role, catalyzes a salvage reaction resulting in the formation of AMP, that is energically less costly than de novo synthesis. In Streptococcus pyogenes serotype M12 (strain MGAS9429), this protein is Adenine phosphoribosyltransferase.